The following is a 226-amino-acid chain: Cytidylate kinase (226 aa).

G10–T18 lines the ATP pocket.

Belongs to the cytidylate kinase family. Type 1 subfamily.

The protein localises to the cytoplasm. The catalysed reaction is CMP + ATP = CDP + ADP. It carries out the reaction dCMP + ATP = dCDP + ADP. This chain is Cytidylate kinase, found in Streptococcus pyogenes serotype M5 (strain Manfredo).